A 407-amino-acid polypeptide reads, in one-letter code: Na(+)-translocating NADH-quinone reductase subunit F (407 aa).

A helical transmembrane segment spans residues 3-23 (IILGVVMFTLIVLALTVMILF). The 95-residue stretch at 32 to 126 (GDITVEINED…NLKIELPEEI (95 aa)) folds into the 2Fe-2S ferredoxin-type domain. [2Fe-2S] cluster contacts are provided by Cys-69, Cys-75, Cys-78, and Cys-110. Residues 129–269 (VKKWTCEVIS…SGPFGEFFAK (141 aa)) form the FAD-binding FR-type domain.

It belongs to the NqrF family. In terms of assembly, composed of six subunits; NqrA, NqrB, NqrC, NqrD, NqrE and NqrF. Requires [2Fe-2S] cluster as cofactor. The cofactor is FAD.

Its subcellular location is the cell inner membrane. It carries out the reaction a ubiquinone + n Na(+)(in) + NADH + H(+) = a ubiquinol + n Na(+)(out) + NAD(+). Its function is as follows. NQR complex catalyzes the reduction of ubiquinone-1 to ubiquinol by two successive reactions, coupled with the transport of Na(+) ions from the cytoplasm to the periplasm. The first step is catalyzed by NqrF, which accepts electrons from NADH and reduces ubiquinone-1 to ubisemiquinone by a one-electron transfer pathway. The protein is Na(+)-translocating NADH-quinone reductase subunit F of Yersinia pseudotuberculosis serotype I (strain IP32953).